Consider the following 161-residue polypeptide: uncharacterized protein (161 aa).

Positions 1-29 form a coiled coil; that stretch reads MTLYDTVKELQEKLRNGEIEINTFLERLG.

This is an uncharacterized protein from Acidianus convivator (ATV).